Reading from the N-terminus, the 60-residue chain is Mastoparan-VT3 (60 aa).

The signal sequence occupies residues 1-27; sequence MKNTILILFTAFIALLGFFGMSAEALA. 4 AXPX repeats span residues 27–30, 31–34, 35–38, and 41–44; these read ADPK, ADPL, AGPN, and ADPE. Positions 28–45 are excised as a propeptide; sequence DPKADPLAGPNPDADPEA. Residue leucine 59 is modified to Leucine amide.

The protein belongs to the MCD family. Mastoparan subfamily. Expressed by the venom gland.

The protein resides in the secreted. In terms of biological role, the synthetic peptide shows antimicrobial activities against Gram-negative bacteria (but not against all strains tested), Gram-positive bacteria (all strains tested) and the fungi C.albicans and C.parapsilosis. Exhibits moderate hemolytic activity (25% at 100 ug/ml) against washed human erythrocytes. This chain is Mastoparan-VT3, found in Vespa tropica (Greater banded hornet).